The following is a 235-amino-acid chain: Transmembrane protein 215 (235 aa).

2 helical membrane passes run 12–32 (LVVA…VSGM) and 40–60 (IPLL…IALA). Residues 99 to 145 (SDLESGKGSSDELAKKAGLRGKPPPQSQGEVSVASSINSPTPTEEGE) form a disordered region. The segment covering 125 to 140 (SQGEVSVASSINSPTP) has biased composition (polar residues).

Its subcellular location is the membrane. This chain is Transmembrane protein 215 (TMEM215), found in Homo sapiens (Human).